Consider the following 187-residue polypeptide: Interferon beta (187 aa).

The N-terminal stretch at 1 to 21 (MTNKCLLQIALLLCFSTTALS) is a signal peptide. At Y24 the chain carries Phosphotyrosine. The cysteines at positions 52 and 162 are disulfide-linked. N101 carries N-linked (GlcNAc...) asparagine glycosylation.

It belongs to the alpha/beta interferon family. Monomer.

The protein localises to the secreted. Type I interferon cytokine that plays a key role in the innate immune response to infection, developing tumors and other inflammatory stimuli. Signals via binding to high-affinity (IFNAR2) and low-affinity (IFNAR1) heterodimeric receptor, activating the canonical Jak-STAT signaling pathway resulting in transcriptional activation or repression of interferon-regulated genes that encode the effectors of the interferon response, such as antiviral proteins, regulators of cell proliferation and differentiation, and immunoregulatory proteins. Signals mostly via binding to a IFNAR1-IFNAR2 heterodimeric receptor, but can also function with IFNAR1 alone and independently of Jak-STAT pathways. Elicits a wide variety of responses, including antiviral and antibacterial activities, and can regulate the development of B-cells, myelopoiesis and lipopolysaccharide (LPS)-inducible production of tumor necrosis factor. Plays a role in neuronal homeostasis by regulating dopamine turnover and protecting dopaminergic neurons: acts by promoting neuronal autophagy and alpha-synuclein clearance, thereby preventing dopaminergic neuron loss. IFNB1 is more potent than interferon-alpha (IFN-alpha) in inducing the apoptotic and antiproliferative pathways required for control of tumor cell growth. The sequence is that of Interferon beta from Homo sapiens (Human).